The primary structure comprises 393 residues: S-adenosylmethionine synthase (393 aa).

An ATP-binding site is contributed by His16. Residue Asp18 coordinates Mg(2+). Glu44 contacts K(+). L-methionine contacts are provided by Glu57 and Gln100. The segment at 100–110 (QSPDIVMGVDG) is flexible loop. ATP-binding positions include 165–167 (DAK), 231–232 (RF), Asp240, 246–247 (RK), and Lys267. Asp240 serves as a coordination point for L-methionine. An L-methionine-binding site is contributed by Lys271.

Belongs to the AdoMet synthase family. Homotetramer; dimer of dimers. It depends on Mg(2+) as a cofactor. Requires K(+) as cofactor.

It is found in the cytoplasm. The catalysed reaction is L-methionine + ATP + H2O = S-adenosyl-L-methionine + phosphate + diphosphate. The protein operates within amino-acid biosynthesis; S-adenosyl-L-methionine biosynthesis; S-adenosyl-L-methionine from L-methionine: step 1/1. Its function is as follows. Catalyzes the formation of S-adenosylmethionine (AdoMet) from methionine and ATP. The overall synthetic reaction is composed of two sequential steps, AdoMet formation and the subsequent tripolyphosphate hydrolysis which occurs prior to release of AdoMet from the enzyme. This chain is S-adenosylmethionine synthase, found in Coxiella burnetii (strain CbuG_Q212) (Coxiella burnetii (strain Q212)).